Here is a 487-residue protein sequence, read N- to C-terminus: Transmembrane protein 161B (487 aa).

A glycan (N-linked (GlcNAc...) asparagine) is linked at Asn34. A helical transmembrane segment spans residues 107 to 127 (LVDFTVAATIVYLVTEVYYSF). Asn135 carries N-linked (GlcNAc...) asparagine glycosylation. 2 helical membrane passes run 136 to 156 (ISLV…FSLT) and 169 to 189 (SVCV…LIVT). N-linked (GlcNAc...) asparagine glycosylation is present at Asn203. The next 5 membrane-spanning stretches (helical) occupy residues 228–248 (FKFF…FPGL), 265–285 (ITQT…LLWV), 305–325 (LMTE…LCVL), 367–387 (VFYY…MLLH), and 459–479 (LSFL…FGLF).

It belongs to the TMEM161 family.

It is found in the cell membrane. Essential for maintaining normal cardiac rhythm in the developing heart and for neonatal survival. Inhibits potassium and calcium currents in the cardiomyocytes, this assists in timely action potential repolarization and thereby maintains normal cardiac rhythm. The sequence is that of Transmembrane protein 161B (Tmem161b) from Mus musculus (Mouse).